The primary structure comprises 342 residues: S-adenosylmethionine:tRNA ribosyltransferase-isomerase (342 aa).

The protein belongs to the QueA family. As to quaternary structure, monomer.

Its subcellular location is the cytoplasm. The enzyme catalyses 7-aminomethyl-7-carbaguanosine(34) in tRNA + S-adenosyl-L-methionine = epoxyqueuosine(34) in tRNA + adenine + L-methionine + 2 H(+). The protein operates within tRNA modification; tRNA-queuosine biosynthesis. In terms of biological role, transfers and isomerizes the ribose moiety from AdoMet to the 7-aminomethyl group of 7-deazaguanine (preQ1-tRNA) to give epoxyqueuosine (oQ-tRNA). The chain is S-adenosylmethionine:tRNA ribosyltransferase-isomerase from Listeria monocytogenes serovar 1/2a (strain ATCC BAA-679 / EGD-e).